A 613-amino-acid chain; its full sequence is Tetratricopeptide repeat protein 39A (613 aa).

3 TPR repeats span residues 315-348 (AIFLFFAGRIEVIKGNIDAAIRRFEECCEAQQHW), 505-538 (CLVKLLKGLCLKYLGRVQEAEENFRSISANEKKI), and 546-579 (PNALLELALLLMEQDRNEEAIKLLESAKQNYKNY).

The protein belongs to the TTC39 family.

The polypeptide is Tetratricopeptide repeat protein 39A (TTC39A) (Homo sapiens (Human)).